We begin with the raw amino-acid sequence, 541 residues long: Zinc finger CCHC domain-containing protein 7 (541 aa).

The tract at residues 111 to 144 is disordered; that stretch reads AEEKTQSPATSHSNKVAQKCKRNNKKPKPEERPG. Polar residues predominate over residues 116-126; sequence QSPATSHSNKV. Glycyl lysine isopeptide (Lys-Gly) (interchain with G-Cter in SUMO2) cross-links involve residues K129, K136, K138, K234, and K249. 3 consecutive CCHC-type zinc fingers follow at residues 236–253, 258–275, and 299–316; these read VTCR…NCPL, RACC…GCPA, and KRCD…ACPE. K334 participates in a covalent cross-link: Glycyl lysine isopeptide (Lys-Gly) (interchain with G-Cter in SUMO2). The CCHC-type 4 zinc finger occupies 343-360; that stretch reads VYCYNCAQKGHYGHECTE. A disordered region spans residues 394 to 541; the sequence is VKDLKKNGDF…KKKKPKPSGL (148 aa). Glycyl lysine isopeptide (Lys-Gly) (interchain with G-Cter in SUMO2) cross-links involve residues K408 and K431. Basic residues predominate over residues 418–434; it reads RRHHDMRKSRSPRKYRR. Over residues 435 to 452 the composition is skewed to basic and acidic residues; it reads WPRENKETQKEKTRSREG. Residue K473 forms a Glycyl lysine isopeptide (Lys-Gly) (interchain with G-Cter in SUMO2) linkage. The segment covering 474-486 has biased composition (polar residues); the sequence is PNASGCANNQKPS. At S477 the chain carries Phosphoserine. Glycyl lysine isopeptide (Lys-Gly) (interchain with G-Cter in SUMO2) cross-links involve residues K484 and K487. Residues 487 to 497 are compositionally biased toward basic residues; the sequence is KSLHHASHYHR. 2 stretches are compositionally biased toward basic and acidic residues: residues 498–509 and 517–527; these read LREERLLRESKR and STEDGSHDDLF. K530 participates in a covalent cross-link: Glycyl lysine isopeptide (Lys-Gly) (interchain with G-Cter in SUMO2). The segment covering 530–541 has biased composition (basic residues); sequence KQKKKKPKPSGL.

Component of a nucleolar TRAMP-like complex, an ATP-dependent exosome regulatory complex consisting of a helicase (MTREX), an oligadenylate polymerase (TENT4B or TENT4A), and a substrate specific RNA-binding factor (ZCCHC7 or ZCCHC8). Several TRAMP-like complexes exist with specific compositions and are associated with nuclear, or nucleolar RNA exosomes.

It localises to the nucleus. It is found in the nucleolus. The protein is Zinc finger CCHC domain-containing protein 7 (Zcchc7) of Mus musculus (Mouse).